Consider the following 421-residue polypeptide: Cyclin-A1 (421 aa).

Positions 1-21 are disordered; that stretch reads MHRQSSKSGVALPPVGQGPDA.

This sequence belongs to the cyclin family. Cyclin AB subfamily. As to quaternary structure, interacts with INCA1 and KLHDC9. Interacts with the CDK2 and CDC2 protein kinases to form a serine/threonine kinase holoenzyme complex. The cyclin subunit imparts substrate specificity to the complex. Found in a complex with CDK2, CABLES1 and CCNE1. Polyubiquitinated via 'Lys-11'-linked ubiquitin by the anaphase-promoting complex (APC/C), leading to its degradation by the proteasome. Deubiquitinated and stabilized by USP37 enables entry into S phase. Ubiquitinated during the G1 phase by the SCF(FBXO31) complex, leading to its proteasomal degradation. In terms of tissue distribution, testis and ovaries.

The protein resides in the nucleus. The protein localises to the cytoplasm. It is found in the cytoskeleton. It localises to the spindle. May be involved in the control of the cell cycle at the G1/S (start) and G2/M (mitosis) transitions. May primarily function in the control of the germline meiotic cell cycle and additionally in the control of mitotic cell cycle in some somatic cells. The polypeptide is Cyclin-A1 (Ccna1) (Mus musculus (Mouse)).